The chain runs to 223 residues: N-terminal Xaa-Pro-Lys N-methyltransferase 1 (223 aa).

The residue at position 1 (methionine 1) is an N-acetylmethionine. N-acetylthreonine; in N-terminal Xaa-Pro-Lys N-methyltransferase 1, N-terminally processed is present on threonine 2. S-adenosyl-L-methionine contacts are provided by residues glycine 69, arginine 74, 91 to 93 (DVT), 119 to 120 (LQ), and glutamine 135.

It belongs to the methyltransferase superfamily. NTM1 family.

It is found in the nucleus. It carries out the reaction N-terminal L-alanyl-L-prolyl-L-lysyl-[protein] + 3 S-adenosyl-L-methionine = N-terminal N,N,N-trimethyl-L-alanyl-L-prolyl-L-lysyl-[protein] + 3 S-adenosyl-L-homocysteine + 3 H(+). The enzyme catalyses N-terminal L-seryl-L-prolyl-L-lysyl-[protein] + 3 S-adenosyl-L-methionine = N-terminal N,N,N-trimethyl-L-seryl-L-prolyl-L-lysyl-[protein] + 3 S-adenosyl-L-homocysteine + 3 H(+). It catalyses the reaction N-terminal L-prolyl-L-prolyl-L-lysyl-[protein] + 2 S-adenosyl-L-methionine = N-terminal N,N-dimethyl-L-prolyl-L-prolyl-L-lysyl-[protein] + 2 S-adenosyl-L-homocysteine + 2 H(+). Its function is as follows. Distributive alpha-N-methyltransferase that methylates the N-terminus of target proteins containing the N-terminal motif [Ala/Gly/Pro/Ser]-Pro-Lys when the initiator Met is cleaved. Specifically catalyzes mono-, di- or tri-methylation of the exposed alpha-amino group of the Ala, Gly or Ser residue in the [Ala/Gly/Ser]-Pro-Lys motif and mono- or di-methylation of Pro in the Pro-Pro-Lys motif. Some of the substrates may be primed by NTMT2-mediated monomethylation. Catalyzes the trimethylation of the N-terminal Gly in CENPA (after removal of Met-1). Responsible for the N-terminal methylation of KLHL31, MYL2, MYL3, RB1, RCC1, RPL23A and SET. Required during mitosis for normal bipolar spindle formation and chromosome segregation via its action on RCC1. The polypeptide is N-terminal Xaa-Pro-Lys N-methyltransferase 1 (Ntmt1) (Mus musculus (Mouse)).